The primary structure comprises 248 residues: Probable transcriptional regulatory protein Avi_3631 (248 aa).

It belongs to the TACO1 family.

The protein localises to the cytoplasm. The chain is Probable transcriptional regulatory protein Avi_3631 from Allorhizobium ampelinum (strain ATCC BAA-846 / DSM 112012 / S4) (Agrobacterium vitis (strain S4)).